The sequence spans 397 residues: Nuclear RNA export factor 5 (397 aa).

In terms of domain architecture, RRM spans 13–92 (WFKVTIPYGI…IFVSHFTAPY (80 aa)). LRR repeat units follow at residues 160–185 (ELLS…EKAP), 186–209 (KVKT…VKGL), 210–237 (KLEE…AIRD), and 238–265 (CFPK…ETMK). The 88-residue stretch at 280–367 (LVLQFLQQSN…ESQRWWCLLS (88 aa)) folds into the NTF2; truncated domain.

Belongs to the NXF family. As to quaternary structure, interacts with NXT1 and NXT2.

The protein resides in the cytoplasm. It is found in the nucleus. In terms of biological role, could be involved in the export of mRNA from the nucleus to the cytoplasm. Could also have a role in polarized cytoplasmic transport and localization of mRNA in neurons. In Homo sapiens (Human), this protein is Nuclear RNA export factor 5 (NXF5).